Here is a 500-residue protein sequence, read N- to C-terminus: MVLAASPEAYRKVIEYGIKKTKLRIDRLFLQAIMAGIYVGMAGHACTALAGAYSTDPANPLAVSKATQKFLYASLFPVAFIAIIFTGAELFTGNTMTMLVCLLERRVTALQLCINWICSLVGNWAGALFAAYFLSYLPGVLQDPDHLHYLEDVAAHKTELSFLQCFCLAVGCNTFVCLAVWFVIASDDAAGKIMSMWFPIVSFCVAGYEHIIANFYTLQCALMHGVGPGVGTVILKNFIPTLLGNIVGGCGLVGAVYWYNFYPTVCVVQEARQPLPLSENAPSSTRQVVADLFSLWGRESSTPGVSASPPDAATNAGCSALDPPRNALLAAGKNFGNLSAGDRGALAEGIPGGACEDCLLVPRASFGGEYHPPQQGDAGRWCKPSKAAVGSGGVLCHVQSPAALEAVSNSPLRENSGVPSGGLLLCEGRVRRSSREREPERGGEEEGASPEEDHPAVTLSIPPTDFHPHVPREVEQSSLLEETRVAAENSALEEHPASTI.

The Cytoplasmic portion of the chain corresponds to 1–31; the sequence is MVLAASPEAYRKVIEYGIKKTKLRIDRLFLQ. Residues 32-52 form a helical membrane-spanning segment; sequence AIMAGIYVGMAGHACTALAGA. Residues 53 to 69 are Extracellular-facing; it reads YSTDPANPLAVSKATQK. The helical transmembrane segment at 70 to 90 threads the bilayer; sequence FLYASLFPVAFIAIIFTGAEL. The Cytoplasmic segment spans residues 91-113; the sequence is FTGNTMTMLVCLLERRVTALQLC. The helical transmembrane segment at 114-134 threads the bilayer; the sequence is INWICSLVGNWAGALFAAYFL. The Extracellular portion of the chain corresponds to 135-164; the sequence is SYLPGVLQDPDHLHYLEDVAAHKTELSFLQ. Residues 165 to 185 form a helical membrane-spanning segment; it reads CFCLAVGCNTFVCLAVWFVIA. Topologically, residues 186-192 are cytoplasmic; sequence SDDAAGK. A helical membrane pass occupies residues 193 to 213; it reads IMSMWFPIVSFCVAGYEHIIA. At 214–237 the chain is on the extracellular side; that stretch reads NFYTLQCALMHGVGPGVGTVILKN. Residues 238–258 traverse the membrane as a helical segment; that stretch reads FIPTLLGNIVGGCGLVGAVYW. Topologically, residues 259 to 500 are cytoplasmic; it reads YNFYPTVCVV…ALEEHPASTI (242 aa). The interval 411–500 is disordered; that stretch reads PLRENSGVPS…ALEEHPASTI (90 aa). Composition is skewed to basic and acidic residues over residues 428-444 and 466-485; these read GRVRRSSREREPERGGE and FHPHVPREVEQSSLLEETRV.

The protein belongs to the FNT transporter (TC 1.A.16) family. As to quaternary structure, homopentamer.

The protein localises to the cell membrane. The catalysed reaction is (S)-lactate(in) + H(+)(in) = (S)-lactate(out) + H(+)(out). It catalyses the reaction formate(in) + H(+)(in) = formate(out) + H(+)(out). The enzyme catalyses pyruvate(out) + H(+)(out) = pyruvate(in) + H(+)(in). It carries out the reaction acetate(out) + H(+)(out) = acetate(in) + H(+)(in). Its activity is regulated as follows. Inhibited by p-chloromercuribenzene sulfonate (pCMBS). Methyl methanethiosulfonate (MMTS) inhibits L-lactate but not formate transport. Inhibited by the Malaria Box compound MMV007839. Inhibited by BH-296, BH-317, BH-326 and BH-388 compounds. In terms of biological role, monocarboxylate-proton symporter; active in acidic-to-neutral pH range. Transports L-lactate and formate. This chain is Formate-nitrite transporter 3, found in Toxoplasma gondii (strain ATCC 50611 / Me49).